Reading from the N-terminus, the 286-residue chain is Aminoglycoside N(3)-acetyltransferase III (286 aa).

This sequence belongs to the antibiotic N-acetyltransferase family.

The enzyme catalyses a 2-deoxystreptamine antibiotic + acetyl-CoA = an N(3)-acetyl-2-deoxystreptamine antibiotic + CoA + H(+). In terms of biological role, resistance to antibiotics containing the 2-deoxy-streptamine ring including gentamicin, kanamycin, tobramycin, neomycin and apramycin. This Salmonella sp protein is Aminoglycoside N(3)-acetyltransferase III (aacC3).